The primary structure comprises 756 residues: Protease KEX1 (756 aa).

The N-terminal stretch at 1-24 is a signal peptide; it reads MILSSQLMLALIAVSGYGKAMQVP. Asn-121, Asn-144, and Asn-152 each carry an N-linked (GlcNAc...) asparagine glycan. The Peptidase S8 domain occupies 130–440; sequence QWHLINPNYP…FGKLDAYNIV (311 aa). Active-site charge relay system residues include Asp-164 and His-202. 2 disulfide bridges follow: Cys-218–Cys-365 and Cys-310–Cys-340. Residue Ser-373 is the Charge relay system of the active site. N-linked (GlcNAc...) asparagine glycans are attached at residues Asn-392 and Asn-538. One can recognise a P/Homo B domain in the interval 449–583; the sequence is VNPQGWLYLP…RLKMFGETID (135 aa). The disordered stretch occupies residues 599-632; the sequence is AEVKSTESKTTTPTAQTSSFTTTSGEETSGANKL. A compositionally biased stretch (low complexity) spans 606–628; the sequence is SKTTTPTAQTSSFTTTSGEETSG. The chain crosses the membrane as a helical span at residues 641–661; sequence LYLAIFVIGAIVIIIYYLFFL. Residues 715 to 756 are disordered; it reads EEELSPRESSSNNPFGNESLESFDNSPDHTSNLLGQNSIPNK. Polar residues predominate over residues 721–756; it reads RESSSNNPFGNESLESFDNSPDHTSNLLGQNSIPNK.

It belongs to the peptidase S8 family. Furin subfamily. Ca(2+) is required as a cofactor.

The protein localises to the membrane. Its function is as follows. Probably involved in the processing of the precursor of m1-toxin and alpha-factor. This is Protease KEX1 (KEX1) from Kluyveromyces lactis (strain ATCC 8585 / CBS 2359 / DSM 70799 / NBRC 1267 / NRRL Y-1140 / WM37) (Yeast).